The following is a 402-amino-acid chain: CCA-adding enzyme (402 aa).

Residues Gly-32 and Arg-35 each coordinate ATP. Positions 32 and 35 each coordinate CTP. 2 residues coordinate Mg(2+): Asp-45 and Asp-47. ATP contacts are provided by Arg-116, Asp-159, Arg-162, Arg-165, and Arg-168. The CTP site is built by Arg-116, Asp-159, Arg-162, Arg-165, and Arg-168.

Belongs to the tRNA nucleotidyltransferase/poly(A) polymerase family. Bacterial CCA-adding enzyme type 3 subfamily. Homodimer. The cofactor is Mg(2+).

It carries out the reaction a tRNA precursor + 2 CTP + ATP = a tRNA with a 3' CCA end + 3 diphosphate. The catalysed reaction is a tRNA with a 3' CCA end + 2 CTP + ATP = a tRNA with a 3' CCACCA end + 3 diphosphate. Its function is as follows. Catalyzes the addition and repair of the essential 3'-terminal CCA sequence in tRNAs without using a nucleic acid template. Adds these three nucleotides in the order of C, C, and A to the tRNA nucleotide-73, using CTP and ATP as substrates and producing inorganic pyrophosphate. tRNA 3'-terminal CCA addition is required both for tRNA processing and repair. Also involved in tRNA surveillance by mediating tandem CCA addition to generate a CCACCA at the 3' terminus of unstable tRNAs. While stable tRNAs receive only 3'-terminal CCA, unstable tRNAs are marked with CCACCA and rapidly degraded. This is CCA-adding enzyme from Streptococcus pyogenes serotype M4 (strain MGAS10750).